Here is a 262-residue protein sequence, read N- to C-terminus: Ribosomal RNA small subunit methyltransferase A (262 aa).

6 residues coordinate S-adenosyl-L-methionine: Asn14, Leu16, Gly41, Glu63, Asp85, and Asn105.

It belongs to the class I-like SAM-binding methyltransferase superfamily. rRNA adenine N(6)-methyltransferase family. RsmA subfamily.

The protein localises to the cytoplasm. It catalyses the reaction adenosine(1518)/adenosine(1519) in 16S rRNA + 4 S-adenosyl-L-methionine = N(6)-dimethyladenosine(1518)/N(6)-dimethyladenosine(1519) in 16S rRNA + 4 S-adenosyl-L-homocysteine + 4 H(+). Its function is as follows. Specifically dimethylates two adjacent adenosines (A1518 and A1519) in the loop of a conserved hairpin near the 3'-end of 16S rRNA in the 30S particle. May play a critical role in biogenesis of 30S subunits. In Maridesulfovibrio salexigens (strain ATCC 14822 / DSM 2638 / NCIMB 8403 / VKM B-1763) (Desulfovibrio salexigens), this protein is Ribosomal RNA small subunit methyltransferase A.